The sequence spans 258 residues: UPF0246 protein Shew_1093 (258 aa).

Belongs to the UPF0246 family.

In Shewanella loihica (strain ATCC BAA-1088 / PV-4), this protein is UPF0246 protein Shew_1093.